A 160-amino-acid chain; its full sequence is Sulfur-rich protein (160 aa).

The next 2 membrane-spanning stretches (helical) occupy residues 62 to 82 (ITMV…TFVL) and 91 to 111 (FLFL…SVFM).

It is found in the membrane. This chain is Sulfur-rich protein (srp), found in Chlamydia caviae (strain ATCC VR-813 / DSM 19441 / 03DC25 / GPIC) (Chlamydophila caviae).